We begin with the raw amino-acid sequence, 261 residues long: Global transcriptional regulator CodY (261 aa).

A GAF domain region spans residues 1 to 159 (MANLLSKTRR…SSTVVGIQLL (159 aa)). A DNA-binding region (H-T-H motif) is located at residues 207-226 (ASVIADRIGITRSVIVNALR).

It belongs to the CodY family.

Its subcellular location is the cytoplasm. Its function is as follows. DNA-binding global transcriptional regulator which is involved in the adaptive response to starvation and acts by directly or indirectly controlling the expression of numerous genes in response to nutrient availability. During rapid exponential growth, CodY is highly active and represses genes whose products allow adaptation to nutrient depletion. This is Global transcriptional regulator CodY from Streptococcus mutans serotype c (strain ATCC 700610 / UA159).